The primary structure comprises 99 residues: Regulatory protein FanB (99 aa).

Trans-acting protein involved in the regulation of the biogenesis of K99 fimbriae (FanC). In Escherichia coli, this protein is Regulatory protein FanB (fanB).